The chain runs to 458 residues: UDP-N-acetylmuramoylalanine--D-glutamate ligase (458 aa).

Residue 124-130 (GSDGKTT) participates in ATP binding.

The protein belongs to the MurCDEF family.

The protein resides in the cytoplasm. It catalyses the reaction UDP-N-acetyl-alpha-D-muramoyl-L-alanine + D-glutamate + ATP = UDP-N-acetyl-alpha-D-muramoyl-L-alanyl-D-glutamate + ADP + phosphate + H(+). It functions in the pathway cell wall biogenesis; peptidoglycan biosynthesis. In terms of biological role, cell wall formation. Catalyzes the addition of glutamate to the nucleotide precursor UDP-N-acetylmuramoyl-L-alanine (UMA). The protein is UDP-N-acetylmuramoylalanine--D-glutamate ligase of Clostridium botulinum (strain Langeland / NCTC 10281 / Type F).